The sequence spans 778 residues: Acyl-homoserine lactone acylase PvdQ (778 aa).

An N-terminal signal peptide occupies residues 1–25 (MTISRQFTGLTLAGLFLGLSLSAQA). A propeptide spans 196–218 (IENNARAYQLADTRLQRFALDRG) (spacer peptide). Serine 219 functions as the Nucleophile in the catalytic mechanism.

Belongs to the peptidase S45 family. As to quaternary structure, heterodimer of an alpha subunit and a beta subunit processed from the same precursor.

Its subcellular location is the periplasm. It carries out the reaction an N-acyl-L-homoserine lactone + H2O = L-homoserine lactone + a carboxylate. In terms of biological role, catalyzes the deacylation of acyl-homoserine lactone (AHL or acyl-HSL), releasing homoserine lactone (HSL) and the corresponding fatty acid. Possesses a specificity for the degradation of long-chain acyl-HSLs (side chains of 11 to 14 carbons in length). The polypeptide is Acyl-homoserine lactone acylase PvdQ (pvdQ) (Pseudomonas fluorescens (strain Pf0-1)).